A 479-amino-acid chain; its full sequence is NADH-quinone oxidoreductase subunit N 2 (479 aa).

14 consecutive transmembrane segments (helical) span residues 4-24 (FVSF…FVVT), 43-63 (GVLV…SGAY), 67-87 (AFSQ…GILS), 99-119 (PEYF…VSSI), 121-141 (VITL…MVAM), 159-179 (IMFG…LYGL), 201-221 (AVTG…VFPF), 239-259 (LIAS…VSLA), 267-287 (ATLL…IALV), 294-314 (LLGF…VAMD), 318-338 (FASA…CFVV), 364-384 (LAVT…FVGF), 401-421 (ALVV…LQIV), and 444-464 (ALCV…AFTI).

Belongs to the complex I subunit 2 family. In terms of assembly, NDH-1 is composed of 14 different subunits. Subunits NuoA, H, J, K, L, M, N constitute the membrane sector of the complex.

It localises to the cell inner membrane. The catalysed reaction is a quinone + NADH + 5 H(+)(in) = a quinol + NAD(+) + 4 H(+)(out). Its function is as follows. NDH-1 shuttles electrons from NADH, via FMN and iron-sulfur (Fe-S) centers, to quinones in the respiratory chain. The immediate electron acceptor for the enzyme in this species is believed to be ubiquinone. Couples the redox reaction to proton translocation (for every two electrons transferred, four hydrogen ions are translocated across the cytoplasmic membrane), and thus conserves the redox energy in a proton gradient. This chain is NADH-quinone oxidoreductase subunit N 2, found in Opitutus terrae (strain DSM 11246 / JCM 15787 / PB90-1).